The following is a 704-amino-acid chain: Elongation factor G (704 aa).

The tr-type G domain occupies 8–290 (ARYRNIGISA…AVIDYLPSPV (283 aa)). GTP-binding positions include 17 to 24 (AHIDAGKT), 88 to 92 (DTPGH), and 142 to 145 (NKMD). An N6-acetyllysine mark is found at Lys504 and Lys643.

It belongs to the TRAFAC class translation factor GTPase superfamily. Classic translation factor GTPase family. EF-G/EF-2 subfamily.

The protein resides in the cytoplasm. Functionally, catalyzes the GTP-dependent ribosomal translocation step during translation elongation. During this step, the ribosome changes from the pre-translocational (PRE) to the post-translocational (POST) state as the newly formed A-site-bound peptidyl-tRNA and P-site-bound deacylated tRNA move to the P and E sites, respectively. Catalyzes the coordinated movement of the two tRNA molecules, the mRNA and conformational changes in the ribosome. The sequence is that of Elongation factor G from Shigella sonnei (strain Ss046).